We begin with the raw amino-acid sequence, 271 residues long: Octanoyltransferase LipM (271 aa).

One can recognise a BPL/LPL catalytic domain in the interval 31-242; that stretch reads GHNKPTLRFY…GLAEQFNVEF (212 aa). C144 acts as the Acyl-thioester intermediate in catalysis.

This sequence belongs to the octanoyltransferase LipM family. As to quaternary structure, monomer.

The catalysed reaction is octanoyl-[ACP] + L-lysyl-[protein] = N(6)-octanoyl-L-lysyl-[protein] + holo-[ACP] + H(+). It participates in protein modification; protein lipoylation via endogenous pathway; protein N(6)-(lipoyl)lysine from octanoyl-[acyl-carrier-protein]. Functionally, catalyzes the transfer of endogenously produced octanoic acid from octanoyl-acyl-carrier-protein onto the lipoyl domain of GcvH, an intermediate carrier during protein lipoylation. In Clostridioides difficile (strain 630) (Peptoclostridium difficile), this protein is Octanoyltransferase LipM.